A 431-amino-acid chain; its full sequence is Adenylosuccinate synthetase (431 aa).

Residues 13-19 (GDEGKGK) and 41-43 (GHT) each bind GTP. Residue D14 is the Proton acceptor of the active site. The Mg(2+) site is built by D14 and G41. IMP contacts are provided by residues 14–17 (DEGK), 39–42 (NAGH), T130, R144, Q225, T240, and R304. H42 (proton donor) is an active-site residue. 300–306 (ATTGRKR) contributes to the substrate binding site. GTP-binding positions include R306, 332 to 334 (KLD), and 415 to 417 (STG).

It belongs to the adenylosuccinate synthetase family. Homodimer. It depends on Mg(2+) as a cofactor.

Its subcellular location is the cytoplasm. It carries out the reaction IMP + L-aspartate + GTP = N(6)-(1,2-dicarboxyethyl)-AMP + GDP + phosphate + 2 H(+). Its pathway is purine metabolism; AMP biosynthesis via de novo pathway; AMP from IMP: step 1/2. Plays an important role in the de novo pathway of purine nucleotide biosynthesis. Catalyzes the first committed step in the biosynthesis of AMP from IMP. The polypeptide is Adenylosuccinate synthetase (Shewanella frigidimarina (strain NCIMB 400)).